The chain runs to 272 residues: Shikimate dehydrogenase (NADP(+)) (272 aa).

Shikimate-binding positions include 14–16 (SLS) and Thr-61. The Proton acceptor role is filled by Lys-65. Position 102 (Asp-102) interacts with shikimate. Residues 127 to 131 (GAGGA), 151 to 156 (NRTPSK), and Leu-215 contribute to the NADP(+) site. Residue Tyr-217 participates in shikimate binding. Gly-239 is a binding site for NADP(+).

It belongs to the shikimate dehydrogenase family. In terms of assembly, homodimer.

The catalysed reaction is shikimate + NADP(+) = 3-dehydroshikimate + NADPH + H(+). Its pathway is metabolic intermediate biosynthesis; chorismate biosynthesis; chorismate from D-erythrose 4-phosphate and phosphoenolpyruvate: step 4/7. Involved in the biosynthesis of the chorismate, which leads to the biosynthesis of aromatic amino acids. Catalyzes the reversible NADPH linked reduction of 3-dehydroshikimate (DHSA) to yield shikimate (SA). The protein is Shikimate dehydrogenase (NADP(+)) of Coxiella burnetii (strain Dugway 5J108-111).